A 432-amino-acid polypeptide reads, in one-letter code: Golgin subfamily A member 6-like protein 9 (432 aa).

Pro residues predominate over residues 1–11 (MWPQPRLPPHP). Disordered stretches follow at residues 1-77 (MWPQ…YGEG) and 349-411 (KELE…AGGA). Positions 51–62 (NGSSPDTFTSGG) are enriched in polar residues. Residues 157-354 (SKMEQLQDET…EQQVKELEKS (198 aa)) are a coiled coil. Residues 349 to 362 (KELEKSGGAEEPRG) show a composition bias toward basic and acidic residues. A compositionally biased stretch (low complexity) spans 366-381 (AAAARPVAGAPVPQGA).

This sequence belongs to the GOLGA6 family.

This Homo sapiens (Human) protein is Golgin subfamily A member 6-like protein 9.